Consider the following 275-residue polypeptide: Beta-lactamase OXA-3 (275 aa).

The signal sequence occupies residues 1 to 21 (MAIRIFAILFSTFVFGTFAHA). Serine 72 functions as the Acyl-ester intermediate in the catalytic mechanism. An N6-carboxylysine modification is found at lysine 75. 210 to 212 (KTG) is a binding site for substrate.

Belongs to the class-D beta-lactamase family.

It carries out the reaction a beta-lactam + H2O = a substituted beta-amino acid. This is an oxacillin-hydrolyzing beta-lactamase. This chain is Beta-lactamase OXA-3 (bla), found in Pseudomonas aeruginosa.